A 468-amino-acid polypeptide reads, in one-letter code: MNTDVRIEKDFLGEKEIPKDAYYGVQTIRATENFPITGYRIHPELIKSLGIVKKSAALANMEVGLLDKEVGQYIVKAADEVIEGKWNDQFIVDPIQGGAGTSINMNANEVIANRALELMGEEKGNYSKISPNSHVNMSQSTNDAFPTATHIAVLSLLNQLIETTKYMQQEFMKKADEFAGVIKMGRTHLQDAVPILLGQEFEAYARVIARDIERIANTRNNLYDINMGATAVGTGLNADPEYISIVTEHLAKFSGHPLRSAQHLVDATQNTDCYTEVSSALKVCMINMSKIANDLRLMASGPRAGLSEIVLPARQPGSSIMPGKVNPVMPEVMNQVAFQVFGNDLTITSASEAGQFELNVMEPVLFFNLIQSISIMTNVFKSFTENCLKGIKANEERMKEYVEKSIGIITAINPHVGYETAAKLAREAYLTGESIRELCIKYGVLTEEQLNEILNPYEMTHPGIAGRK.

6 residues coordinate L-aspartate: threonine 101, serine 140, threonine 141, asparagine 142, threonine 187, and histidine 188. The interval 317-326 is SS loop; that stretch reads GSSIMPGKVN. Serine 318 functions as the Proton acceptor in the catalytic mechanism. Serine 319 and lysine 324 together coordinate L-aspartate.

Belongs to the class-II fumarase/aspartase family. Aspartase subfamily. Homotetramer.

The catalysed reaction is L-aspartate = fumarate + NH4(+). Unlike E.coli aspartase, the enzyme is not activated by the presence of divalent metal ions at alkaline pH. Catalyzes the reversible conversion of L-aspartate to fumarate and ammonia. Is highly specific for L-aspartate in the deamination reaction, and cannot use alternative substrates such as D-aspartic acid, alpha-methyl-DL-aspartic acid, beta-methyl-DL-aspartic acid or L-glutamate. In the reverse reaction, alternative nucleophiles (such as hydroxylamine, hydrazine, methoxylamine and methylamine) can replace ammonia in vitro, leading to the formation of N-substituted aspartic acid derivatives. This Bacillus sp protein is Aspartate ammonia-lyase.